The sequence spans 275 residues: Small ribosomal subunit protein uS2 (275 aa).

Positions 232 to 256 (ARATDGKPEPEPVPGQELGADEPLA) are disordered.

Belongs to the universal ribosomal protein uS2 family.

The sequence is that of Small ribosomal subunit protein uS2 from Acidothermus cellulolyticus (strain ATCC 43068 / DSM 8971 / 11B).